Here is an 88-residue protein sequence, read N- to C-terminus: UPF0297 protein YrzL (88 aa).

The protein belongs to the UPF0297 family.

The polypeptide is UPF0297 protein YrzL (yrzL) (Bacillus subtilis (strain 168)).